The sequence spans 159 residues: Phosphopantetheine adenylyltransferase (159 aa).

Thr-10 provides a ligand contact to substrate. Residues 10 to 11 (TF) and His-18 each bind ATP. Substrate is bound by residues Lys-42, Met-74, and Arg-88. ATP is bound by residues 89–91 (GLR), Glu-99, and 124–130 (WSFISSS).

This sequence belongs to the bacterial CoaD family. In terms of assembly, homohexamer. It depends on Mg(2+) as a cofactor.

The protein resides in the cytoplasm. It carries out the reaction (R)-4'-phosphopantetheine + ATP + H(+) = 3'-dephospho-CoA + diphosphate. Its pathway is cofactor biosynthesis; coenzyme A biosynthesis; CoA from (R)-pantothenate: step 4/5. Reversibly transfers an adenylyl group from ATP to 4'-phosphopantetheine, yielding dephospho-CoA (dPCoA) and pyrophosphate. This is Phosphopantetheine adenylyltransferase from Enterobacter sp. (strain 638).